Here is a 330-residue protein sequence, read N- to C-terminus: UPF0324 membrane protein PG_2004 (330 aa).

9 helical membrane passes run 13–31 (IAYP…GSLV), 36–58 (PFTS…LIFG), 71–93 (VLLQ…LASG), 97–114 (MMFT…GWFI), 126–148 (SALI…GPIL), 158–180 (ALGT…GHWL), 248–270 (VPLF…EAYF), 285–307 (LTLS…VGVR), and 312–329 (GLFL…FILL).

The protein belongs to the UPF0324 family.

It is found in the cell membrane. The polypeptide is UPF0324 membrane protein PG_2004 (Porphyromonas gingivalis (strain ATCC BAA-308 / W83)).